A 501-amino-acid chain; its full sequence is Beta-secretase 1 (501 aa).

An N-terminal signal peptide occupies residues 1 to 21; the sequence is MAQALPWLLLWMGAGVLPAHG. Residues 22 to 45 constitute a propeptide that is removed on maturation; sequence TQHGIRLPLRSGLGGAPLGLRLPR. Residues 22 to 457 are Extracellular-facing; that stretch reads TQHGIRLPLR…PQTDESTLMT (436 aa). A disordered region spans residues 39–58; it reads LGLRLPRETDEEPEEPGRRG. The Peptidase A1 domain occupies 75 to 416; that stretch reads YYVEMTVGSP…DRARKRIGFA (342 aa). Residue D93 is part of the active site. K126 is subject to N6-acetyllysine. N-linked (GlcNAc...) asparagine glycosylation is found at N153, N172, and N223. Disulfide bonds link C216-C420, C278-C443, and C330-C380. K275, K279, and K285 each carry N6-acetyllysine. Residue D289 is part of the active site. An N6-acetyllysine mark is found at K299, K300, and K307. A glycan (N-linked (GlcNAc...) asparagine) is linked at N354. The chain crosses the membrane as a helical span at residues 458 to 478; sequence IAYVMAAICALFMLPLCLMVC. S-palmitoyl cysteine attachment occurs at residues C474, C478, C482, and C485. Residues 479 to 501 lie on the Cytoplasmic side of the membrane; sequence QWRCLRCLRQQHDDFADDISLLK. The tract at residues 479 to 501 is interaction with RTN3; it reads QWRCLRCLRQQHDDFADDISLLK. The DXXLL motif lies at 496-500; sequence DISLL. S498 is modified (phosphoserine). K501 participates in a covalent cross-link: Glycyl lysine isopeptide (Lys-Gly) (interchain with G-Cter in ubiquitin).

Belongs to the peptidase A1 family. Monomer. Interacts (via DXXLL motif) with GGA1, GGA2 and GGA3 (via their VHS domain); the interaction highly increases when BACE1 is phosphorylated at Ser-498. Interacts with RTN1; RTN2; RTN3 and RTN4; the interaction leads to inhibition of amyloid precursor protein processing. Interacts with SNX6. Interacts with PCSK9. Interacts with NAT8 and NAT8B. Interacts with BIN1. Interacts (via extracellular domain) with ADAM10 (via extracellular domain). Interacts with SORL1; this interaction may affect binding with APP and hence reduce APP cleavage. Interacts with NRDC AND NRG1. In terms of processing, N-Glycosylated. Addition of a bisecting N-acetylglucosamine by MGAT3 blocks lysosomal targeting, further degradation and is required for maintaining stability under stress conditions. Acetylated in the endoplasmic reticulum at Lys-126, Lys-275, Lys-279, Lys-285, Lys-299, Lys-300 and Lys-307. Acetylation by NAT8 and NAT8B is transient and deacetylation probably occurs in the Golgi. Acetylation regulates the maturation, the transport to the plasma membrane, the stability and the expression of the protein. Post-translationally, palmitoylation mediates lipid raft localization. In terms of processing, ubiquitinated at Lys-501, ubiquitination leads to lysosomal degradation. Monoubiquitinated and 'Lys-63'-linked polyubitinated. Deubiquitnated by USP8; inhibits lysosomal degradation. Phosphorylation at Ser-498 is required for interaction with GGA1 and retrograded transport from endosomal compartments to the trans-Golgi network. Non-phosphorylated BACE1 enters a direct recycling route to the cell surface. In terms of tissue distribution, expressed at high levels in the brain and pancreas. In the brain, expression is highest in the substantia nigra, locus coruleus and medulla oblongata.

It localises to the cell membrane. Its subcellular location is the golgi apparatus. The protein resides in the trans-Golgi network. The protein localises to the endoplasmic reticulum. It is found in the endosome. It localises to the cell surface. Its subcellular location is the cytoplasmic vesicle membrane. The protein resides in the membrane raft. The protein localises to the lysosome. It is found in the late endosome. It localises to the early endosome. Its subcellular location is the recycling endosome. The protein resides in the cell projection. The protein localises to the axon. It is found in the dendrite. It catalyses the reaction Broad endopeptidase specificity. Cleaves Glu-Val-Asn-Leu-|-Asp-Ala-Glu-Phe in the Swedish variant of Alzheimer's amyloid precursor protein.. Inhibited by RTN3 and RTN4. In terms of biological role, responsible for the proteolytic processing of the amyloid precursor protein (APP). Cleaves at the N-terminus of the A-beta peptide sequence, between residues 671 and 672 of APP, leads to the generation and extracellular release of beta-cleaved soluble APP, and a corresponding cell-associated C-terminal fragment which is later released by gamma-secretase. Cleaves CHL1. In Homo sapiens (Human), this protein is Beta-secretase 1.